A 212-amino-acid chain; its full sequence is Tetraspanin-31-A (212 aa).

Over 1–12 (MVCGGFTCSKNA) the chain is Cytoplasmic. A helical transmembrane segment spans residues 13–33 (LCALNVVYMLVGLLLIGVAAW). Topologically, residues 34–44 (GKGFGIVSSIH) are extracellular. A helical transmembrane segment spans residues 45-65 (IIGGVIAIGVFLLLIAIIGLI). The Cytoplasmic segment spans residues 66–72 (GAVSHHQ). Residues 73–93 (VMLFIYMVVLILVFIFQFIVS) traverse the membrane as a helical segment. Over 94 to 175 (CSCLAMNRSQ…MLNHADEALK (82 aa)) the chain is Extracellular. N100, N109, N117, and N134 each carry an N-linked (GlcNAc...) asparagine glycan. A helical transmembrane segment spans residues 176-196 (ILGGVGLFFSFTEILGVWLAF). Residues 197 to 212 (RFRNQKDPRANPSAFL) lie on the Cytoplasmic side of the membrane.

This sequence belongs to the tetraspanin (TM4SF) family.

The protein resides in the membrane. This chain is Tetraspanin-31-A (tspan31-a), found in Xenopus laevis (African clawed frog).